The primary structure comprises 256 residues: Thiazole synthase (256 aa).

The active-site Schiff-base intermediate with DXP is the K95. 1-deoxy-D-xylulose 5-phosphate-binding positions include G156, 182-183 (AG), and 204-205 (NT).

It belongs to the ThiG family. Homotetramer. Forms heterodimers with either ThiH or ThiS.

It is found in the cytoplasm. It catalyses the reaction [ThiS sulfur-carrier protein]-C-terminal-Gly-aminoethanethioate + 2-iminoacetate + 1-deoxy-D-xylulose 5-phosphate = [ThiS sulfur-carrier protein]-C-terminal Gly-Gly + 2-[(2R,5Z)-2-carboxy-4-methylthiazol-5(2H)-ylidene]ethyl phosphate + 2 H2O + H(+). It participates in cofactor biosynthesis; thiamine diphosphate biosynthesis. In terms of biological role, catalyzes the rearrangement of 1-deoxy-D-xylulose 5-phosphate (DXP) to produce the thiazole phosphate moiety of thiamine. Sulfur is provided by the thiocarboxylate moiety of the carrier protein ThiS. In vitro, sulfur can be provided by H(2)S. The polypeptide is Thiazole synthase (Escherichia coli O8 (strain IAI1)).